Reading from the N-terminus, the 277-residue chain is uncharacterized protein (277 aa).

This is an uncharacterized protein from Methanocaldococcus jannaschii (strain ATCC 43067 / DSM 2661 / JAL-1 / JCM 10045 / NBRC 100440) (Methanococcus jannaschii).